We begin with the raw amino-acid sequence, 459 residues long: Cysteine--tRNA ligase (459 aa).

Cysteine 28 contributes to the Zn(2+) binding site. The short motif at 30-40 (VTVYDLCHIGH) is the 'HIGH' region element. Cysteine 209, histidine 234, and glutamate 238 together coordinate Zn(2+). The 'KMSKS' region signature appears at 266–270 (KMSKS). Lysine 269 is a binding site for ATP.

It belongs to the class-I aminoacyl-tRNA synthetase family. Monomer. Zn(2+) is required as a cofactor.

The protein resides in the cytoplasm. It catalyses the reaction tRNA(Cys) + L-cysteine + ATP = L-cysteinyl-tRNA(Cys) + AMP + diphosphate. The protein is Cysteine--tRNA ligase of Haemophilus influenzae (strain 86-028NP).